The sequence spans 307 residues: Membrane protein insertase YidC 2 (307 aa).

Residues 1 to 23 (MKLTLNRILFSGLALSILFTLTG) form the signal peptide. Residue Cys-24 is the site of N-palmitoyl cysteine attachment. A lipid anchor (S-diacylglycerol cysteine) is attached at Cys-24. A run of 5 helical transmembrane segments spans residues 58 to 78 (LGYG…ILPL), 135 to 155 (LGGI…AMYF), 179 to 199 (VLTA…MMAV), 209 to 225 (TMMY…SFSL), and 231 to 251 (LYWL…TYLL). A disordered region spans residues 263–307 (YAKTPPKAYQSTSSRKDVTPSQNMEQANLPKKIKSNRNAGKQRKR). The span at 271–288 (YQSTSSRKDVTPSQNMEQ) shows a compositional bias: polar residues. Residues 293-307 (KKIKSNRNAGKQRKR) are compositionally biased toward basic residues.

This sequence belongs to the OXA1/ALB3/YidC family. Type 2 subfamily.

The protein resides in the cell membrane. Functionally, required for the insertion and/or proper folding and/or complex formation of integral membrane proteins into the membrane. Involved in integration of membrane proteins that insert both dependently and independently of the Sec translocase complex, as well as at least some lipoproteins. This chain is Membrane protein insertase YidC 2, found in Streptococcus pyogenes serotype M18 (strain MGAS8232).